The following is a 175-amino-acid chain: MPETKLVALPEFQELKSNDEYISMQPYKGEDNKSYIANLVRHNALTFCPYYFIEKSGKGSVVYFHPTSDLCGYKNIVHGGFITTMLDEALAFGVFPNFPSKMGVTVQLDTTYVAPALCSHLYKIVTKTTKVEGRKCWTSGELLRLNGSEPPVLCAKASGFFVEPSKLNLEHHVKK.

The protein resides in the cytoplasm. It is found in the nucleus. This is an uncharacterized protein from Schizosaccharomyces pombe (strain 972 / ATCC 24843) (Fission yeast).